A 396-amino-acid polypeptide reads, in one-letter code: Chaperone protein DnaJ 1 (396 aa).

The J domain maps to aspartate 10–arginine 75. The span at leucine 127–threonine 137 shows a compositional bias: gly residues. Positions leucine 127–isoleucine 149 are disordered. The segment at glycine 163–serine 241 adopts a CR-type zinc-finger fold. Cysteine 176, cysteine 179, cysteine 192, cysteine 195, cysteine 215, cysteine 218, cysteine 229, and cysteine 232 together coordinate Zn(2+). CXXCXGXG motif repeat units lie at residues cysteine 176–glycine 183, cysteine 192–glycine 199, cysteine 215–glycine 222, and cysteine 229–glycine 236.

This sequence belongs to the DnaJ family. In terms of assembly, homodimer. Zn(2+) serves as cofactor.

It is found in the cytoplasm. Its function is as follows. Participates actively in the response to hyperosmotic and heat shock by preventing the aggregation of stress-denatured proteins and by disaggregating proteins, also in an autonomous, DnaK-independent fashion. Unfolded proteins bind initially to DnaJ; upon interaction with the DnaJ-bound protein, DnaK hydrolyzes its bound ATP, resulting in the formation of a stable complex. GrpE releases ADP from DnaK; ATP binding to DnaK triggers the release of the substrate protein, thus completing the reaction cycle. Several rounds of ATP-dependent interactions between DnaJ, DnaK and GrpE are required for fully efficient folding. Also involved, together with DnaK and GrpE, in the DNA replication of plasmids through activation of initiation proteins. This is Chaperone protein DnaJ 1 from Streptomyces avermitilis (strain ATCC 31267 / DSM 46492 / JCM 5070 / NBRC 14893 / NCIMB 12804 / NRRL 8165 / MA-4680).